We begin with the raw amino-acid sequence, 75 residues long: uncharacterized protein (75 aa).

A signal peptide spans 1–26 (MQFLERHFSVLFPVLFFFSFYPISFA).

It localises to the secreted. This is an uncharacterized protein from Schizosaccharomyces pombe (strain 972 / ATCC 24843) (Fission yeast).